We begin with the raw amino-acid sequence, 215 residues long: MASATLPAWIKMPSFLKKILKLRGRRQEDESRSRMLSDSSTQSYQVNQLTSEETEAGSTIPSTPSKGQALPTEPKVRAREKSRHRRPKIIDQVRRVESLGEQASQRQKHMLETLINKIYTGPLGEELVQTLYLRIWAMEETPESLKILQMREDIRDQVLKMKTERWLRTLIRGEKTKLKDFQKRYEEVHPYLMKEKVEQIIMEEAWSLAAHIVQE.

The interval 12-34 (MPSFLKKILKLRGRRQEDESRSR) is disordered. Residues 15–22 (FLKKILKL) are involved in self-degradation and in host STAT1 degradation. Residues 25–35 (RRQEDESRSRM) are compositionally biased toward basic and acidic residues. Residues 36–66 (LSDSSTQSYQVNQLTSEETEAGSTIPSTPSK) are compositionally biased toward polar residues.

Belongs to the respirovirus protein C family. In terms of assembly, the different isoforms interact (via C-terminus) with unphosphorylated and phosphorylated human STAT1 (via N-terminus), favoring the formation of parallel STAT1 homodimers. The different isoforms do not interact with host STAT2. C protein interacts with L protein; this interaction has an inhibitory effect on viral transcription and replication. Protein Y1 is produced not only by alternative initiation, but also by proteolytic cleavage of C'. Only alternative initiation is detected in vitro, whereas in vivo cleavage seems to be predominant.

The protein resides in the host cytoplasm. In terms of biological role, the different products prevent the establishment of cellular antiviral state by blocking the interferon-alpha/beta (IFN-alpha/beta) and IFN-gamma signaling pathways. They inhibit IFN-alpha/beta induced tyrosine phosphorylation of STAT1 and STAT2. Blocking the IFN-alpha/beta pathway requires binding to STAT1 in the cytoplasm. They inhibit IFN-gamma induced serine phosphorylation of STAT1. Block the IFN-gamma pathway by binding to and stabilizing the parallel form of the STAT1 dimer, further inducing high-molecular-weight complex formation and inhibition of transcription by IFN-gamma. May also have a role in preventing the cell to enter apoptosis. Modulate regulation of viral transcription and replication. Overexpression inhibits the viral RNA polymerase. The absence of all C', C and Y1 proteins leads to viral delayed growth. Plays an important role in virion particles release. Modulates virion shape. The polypeptide is Protein C' (P/V/C) (Cavia cutleri (Guinea pig)).